The sequence spans 74 residues: Protein SlyX homolog (74 aa).

This sequence belongs to the SlyX family.

The chain is Protein SlyX homolog from Neisseria meningitidis serogroup C / serotype 2a (strain ATCC 700532 / DSM 15464 / FAM18).